Here is a 384-residue protein sequence, read N- to C-terminus: MLASYASDPLKSRGRLYKEIPTYYRNEFERDRDRIIHTNAFRRLQYKTQVFINHEEGDHYRNRLTHSLEVATVARSVANTLNLSSDLAETIALAHDLGHTPFGHVGEKALNECMKEYNGFSHNSQSLKILTLLEKRYAAYNGVNLTWEVLEGIVKHNGPILGAINEYVAEYNKQNDLELNTYASAEAQIASLADDISYISHDLEDSIIAKIIDFNNLAELQYIDNYVFKLKSKFKDISPSCLIYEIVRKLIHELITDLLLQTKENLKKEKITNINEIRNLHYQIVDFTEKTNERINETKKFLHKRVYESNKMIAISIKCTKIVQGLFKIYMDDINLLPTNWKILIDSNETYSKARVIADYIAGMTDRFAIQEYNQLCAPKFNKI.

An HD domain is found at 63–199 (RLTHSLEVAT…ASLADDISYI (137 aa)).

This sequence belongs to the dGTPase family. Type 2 subfamily.

The protein is Deoxyguanosinetriphosphate triphosphohydrolase-like protein of Rickettsia typhi (strain ATCC VR-144 / Wilmington).